Here is a 352-residue protein sequence, read N- to C-terminus: Probable tyrosine-protein kinase DDB_G0290471 (352 aa).

In terms of domain architecture, Protein kinase spans 51–333 (IEYVCRLGSG…ISLNQIRSFY (283 aa)). Residues 57 to 65 (LGSGSLCRV) and Lys-78 contribute to the ATP site. Asp-175 (proton acceptor) is an active-site residue.

It belongs to the protein kinase superfamily. TKL Tyr protein kinase family.

It carries out the reaction L-tyrosyl-[protein] + ATP = O-phospho-L-tyrosyl-[protein] + ADP + H(+). In Dictyostelium discoideum (Social amoeba), this protein is Probable tyrosine-protein kinase DDB_G0290471.